The sequence spans 293 residues: Exosome complex component RRP4 (293 aa).

The 81-residue stretch at 79-159 folds into the S1 motif domain; sequence EVGDIVVGRI…SDGAVSLHTR (81 aa). Residue Ser124 is modified to Phosphoserine.

The protein belongs to the RRP4 family. As to quaternary structure, component of the RNA exosome core complex (Exo-9), composed of EXOSC1, EXOSC2, EXOSC3, EXOSC4, EXOSC5, EXOSC6, EXOSC7, EXOSC8 and EXOSC9; within the complex interacts with EXOSC4 and EXOSC7. The catalytically inactive RNA exosome core complex (Exo-9) associates with the catalytic subunit EXOSC10/RRP6. Exo-9 may associate with DIS3 to form the nucleolar exosome complex, or DIS3L to form the cytoplasmic exosome complex. Exo-9 is formed by a hexameric base ring consisting of the heterodimers EXOSC4-EXOSC9, EXOSC5-EXOSC8 and EXOSC6-EXOSC7, and a cap ring consisting of EXOSC1, EXOSC2 and EXOSC3. The RNA exosome complex associates with cofactors C1D/RRP47, MPHOSPH6/MPP6 and MTREX/MTR4. Interacts with GTPBP1. Interacts with ZFP36L1 (via N-terminus).

The protein localises to the cytoplasm. The protein resides in the nucleus. Its subcellular location is the nucleolus. Functionally, non-catalytic component of the RNA exosome complex which has 3'-&gt;5' exoribonuclease activity and participates in a multitude of cellular RNA processing and degradation events. In the nucleus, the RNA exosome complex is involved in proper maturation of stable RNA species such as rRNA, snRNA and snoRNA, in the elimination of RNA processing by-products and non-coding 'pervasive' transcripts, such as antisense RNA species and promoter-upstream transcripts (PROMPTs), and of mRNAs with processing defects, thereby limiting or excluding their export to the cytoplasm. The RNA exosome may be involved in Ig class switch recombination (CSR) and/or Ig variable region somatic hypermutation (SHM) by targeting AICDA deamination activity to transcribed dsDNA substrates. In the cytoplasm, the RNA exosome complex is involved in general mRNA turnover and specifically degrades inherently unstable mRNAs containing AU-rich elements (AREs) within their 3' untranslated regions, and in RNA surveillance pathways, preventing translation of aberrant mRNAs. It seems to be involved in degradation of histone mRNA. The catalytic inactive RNA exosome core complex of 9 subunits (Exo-9) is proposed to play a pivotal role in the binding and presentation of RNA for ribonucleolysis, and to serve as a scaffold for the association with catalytic subunits and accessory proteins or complexes. EXOSC2 as peripheral part of the Exo-9 complex stabilizes the hexameric ring of RNase PH-domain subunits through contacts with EXOSC4 and EXOSC7. The sequence is that of Exosome complex component RRP4 (EXOSC2) from Bos taurus (Bovine).